The primary structure comprises 78 residues: Acyl carrier protein (78 aa).

Residues 1 to 76 (MSLEERVKEI…DVINYLKEKV (76 aa)) form the Carrier domain. Ser36 bears the O-(pantetheine 4'-phosphoryl)serine mark.

It belongs to the acyl carrier protein (ACP) family. 4'-phosphopantetheine is transferred from CoA to a specific serine of apo-ACP by AcpS. This modification is essential for activity because fatty acids are bound in thioester linkage to the sulfhydryl of the prosthetic group.

It is found in the cytoplasm. It participates in lipid metabolism; fatty acid biosynthesis. In terms of biological role, carrier of the growing fatty acid chain in fatty acid biosynthesis. The protein is Acyl carrier protein of Aquifex aeolicus (strain VF5).